A 975-amino-acid chain; its full sequence is Probable ATP-dependent RNA helicase CG8611 (975 aa).

Positions 1–24 (MVENISLNVTVKSSARKNQQQSPA) are enriched in polar residues. Disordered regions lie at residues 1 to 38 (MVEN…QDFD), 50 to 104 (AIVV…DDLM), and 127 to 295 (TTKP…FRTK). Low complexity predominate over residues 64-94 (PTNSSVPNTTKSPTPSVSSSKSAISTLSASP). 2 positions are modified to phosphoserine: S75 and S99. The segment covering 190–203 (QLEEERRQKRREEG) has biased composition (basic and acidic residues). S210, S220, and S224 each carry phosphoserine. Residues 242–261 (IEDSGESGEESATSDEEPDE) show a composition bias toward acidic residues. Residues 269–285 (QEKEPKQTAKKPPKAEE) are compositionally biased toward basic and acidic residues. The short motif at 327–356 (SKISTLGLHPHAVKNLEDLLSIRELTSVQQ) is the Q motif element. Residues 359-548 (IPEVLQGKDV…GLTLKNPLYI (190 aa)) enclose the Helicase ATP-binding domain. 372–379 (SQTGSGKT) is a binding site for ATP. The DEAD box motif lies at 485–488 (DEAD). Positions 616–789 (LLAKEVDASP…DMYAYLQTLL (174 aa)) constitute a Helicase C-terminal domain. Phosphoserine is present on S667. 2 disordered regions span residues 915–942 (LQQR…VGRS) and 955–975 (NMSE…RKQA).

The protein belongs to the DEAD box helicase family. DDX31/DBP7 subfamily.

The catalysed reaction is ATP + H2O = ADP + phosphate + H(+). Functionally, probable ATP-dependent RNA helicase. The polypeptide is Probable ATP-dependent RNA helicase CG8611 (Drosophila melanogaster (Fruit fly)).